Reading from the N-terminus, the 630-residue chain is Phosphatidylinositol 4-kinase gamma 5 (630 aa).

Positions R41 to R98 constitute a Ubiquitin-like; degenerate domain. One can recognise a PI3K/PI4K catalytic domain in the interval G162 to P459. The G-loop stretch occupies residues V168–G174. ATP-binding positions include N169–A175, K190, and Q279–I282. Positions L312 to N320 are catalytic loop. The segment at P339–I365 is activation loop. D341 contacts ATP. Positions L500–D527 are disordered. Positions T506–D524 are enriched in acidic residues. At S571 the chain carries Phosphoserine.

Belongs to the PI3/PI4-kinase family. Type II PI4K subfamily. In terms of assembly, interacts with AHK2.

The catalysed reaction is a 1,2-diacyl-sn-glycero-3-phospho-(1D-myo-inositol) + ATP = a 1,2-diacyl-sn-glycero-3-phospho-(1D-myo-inositol 4-phosphate) + ADP + H(+). Functionally, the phosphorylation of phosphatidylinositol (PI) to PI4P is the first committed step in the generation of phosphatidylinositol 4,5-bisphosphate (PIP2), a precursor of the second messenger inositol 1,4,5-trisphosphate (InsP3). The protein is Phosphatidylinositol 4-kinase gamma 5 (PI4KG5) of Arabidopsis thaliana (Mouse-ear cress).